A 343-amino-acid chain; its full sequence is Anthranilate phosphoribosyltransferase (343 aa).

Residues Gly-84, 87-88 (GD), Thr-92, 94-97 (NIST), 112-120 (KHGNRGVSS), and Ser-124 each bind 5-phospho-alpha-D-ribose 1-diphosphate. Gly-84 is an anthranilate binding site. Ser-96 serves as a coordination point for Mg(2+). An anthranilate-binding site is contributed by Asn-115. Arg-170 provides a ligand contact to anthranilate. Residues Asp-229 and Glu-230 each contribute to the Mg(2+) site.

Belongs to the anthranilate phosphoribosyltransferase family. Homodimer. Mg(2+) is required as a cofactor.

The enzyme catalyses N-(5-phospho-beta-D-ribosyl)anthranilate + diphosphate = 5-phospho-alpha-D-ribose 1-diphosphate + anthranilate. It participates in amino-acid biosynthesis; L-tryptophan biosynthesis; L-tryptophan from chorismate: step 2/5. Catalyzes the transfer of the phosphoribosyl group of 5-phosphorylribose-1-pyrophosphate (PRPP) to anthranilate to yield N-(5'-phosphoribosyl)-anthranilate (PRA). The protein is Anthranilate phosphoribosyltransferase of Burkholderia ambifaria (strain ATCC BAA-244 / DSM 16087 / CCUG 44356 / LMG 19182 / AMMD) (Burkholderia cepacia (strain AMMD)).